A 334-amino-acid chain; its full sequence is G2/mitotic-specific cyclin-1 (334 aa).

Belongs to the cyclin family. Cyclin AB subfamily.

Functionally, essential for the control of the cell cycle at the G2/M (mitosis) transition. In Trypanosoma brucei brucei, this protein is G2/mitotic-specific cyclin-1 (CYC1).